A 383-amino-acid chain; its full sequence is Putative glutamate--cysteine ligase 2-1 (383 aa).

It belongs to the glutamate--cysteine ligase type 2 family. YbdK subfamily.

The catalysed reaction is L-cysteine + L-glutamate + ATP = gamma-L-glutamyl-L-cysteine + ADP + phosphate + H(+). Its function is as follows. ATP-dependent carboxylate-amine ligase which exhibits weak glutamate--cysteine ligase activity. This is Putative glutamate--cysteine ligase 2-1 from Legionella pneumophila (strain Corby).